A 219-amino-acid polypeptide reads, in one-letter code: Cytidylate kinase (219 aa).

9–17 (GPAGSGKTT) is a binding site for ATP.

This sequence belongs to the cytidylate kinase family. Type 1 subfamily.

The protein localises to the cytoplasm. The catalysed reaction is CMP + ATP = CDP + ADP. The enzyme catalyses dCMP + ATP = dCDP + ADP. This chain is Cytidylate kinase, found in Fervidobacterium nodosum (strain ATCC 35602 / DSM 5306 / Rt17-B1).